Consider the following 283-residue polypeptide: 4-diphosphocytidyl-2-C-methyl-D-erythritol kinase (283 aa).

Lysine 10 is a catalytic residue. Residue 99 to 109 participates in ATP binding; the sequence is PMGGGLGGGSS. Aspartate 141 is a catalytic residue.

It belongs to the GHMP kinase family. IspE subfamily. In terms of assembly, homodimer.

It catalyses the reaction 4-CDP-2-C-methyl-D-erythritol + ATP = 4-CDP-2-C-methyl-D-erythritol 2-phosphate + ADP + H(+). Its pathway is isoprenoid biosynthesis; isopentenyl diphosphate biosynthesis via DXP pathway; isopentenyl diphosphate from 1-deoxy-D-xylulose 5-phosphate: step 3/6. In terms of biological role, catalyzes the phosphorylation of the position 2 hydroxy group of 4-diphosphocytidyl-2C-methyl-D-erythritol. This Salmonella typhi protein is 4-diphosphocytidyl-2-C-methyl-D-erythritol kinase.